The primary structure comprises 405 residues: Probable tRNA sulfurtransferase (405 aa).

The region spanning 60-165 (DQVMARLSQV…REAIYLSTKT (106 aa)) is the THUMP domain. Residues 183 to 184 (ML), 208 to 209 (HF), Arg265, Gly287, and Gln296 contribute to the ATP site.

The protein belongs to the ThiI family.

The protein localises to the cytoplasm. It carries out the reaction [ThiI sulfur-carrier protein]-S-sulfanyl-L-cysteine + a uridine in tRNA + 2 reduced [2Fe-2S]-[ferredoxin] + ATP + H(+) = [ThiI sulfur-carrier protein]-L-cysteine + a 4-thiouridine in tRNA + 2 oxidized [2Fe-2S]-[ferredoxin] + AMP + diphosphate. The catalysed reaction is [ThiS sulfur-carrier protein]-C-terminal Gly-Gly-AMP + S-sulfanyl-L-cysteinyl-[cysteine desulfurase] + AH2 = [ThiS sulfur-carrier protein]-C-terminal-Gly-aminoethanethioate + L-cysteinyl-[cysteine desulfurase] + A + AMP + 2 H(+). It functions in the pathway cofactor biosynthesis; thiamine diphosphate biosynthesis. In terms of biological role, catalyzes the ATP-dependent transfer of a sulfur to tRNA to produce 4-thiouridine in position 8 of tRNAs, which functions as a near-UV photosensor. Also catalyzes the transfer of sulfur to the sulfur carrier protein ThiS, forming ThiS-thiocarboxylate. This is a step in the synthesis of thiazole, in the thiamine biosynthesis pathway. The sulfur is donated as persulfide by IscS. This chain is Probable tRNA sulfurtransferase, found in Lacticaseibacillus paracasei (strain ATCC 334 / BCRC 17002 / CCUG 31169 / CIP 107868 / KCTC 3260 / NRRL B-441) (Lactobacillus paracasei).